Here is a 1035-residue protein sequence, read N- to C-terminus: Protein SEY1 homolog (1035 aa).

One can recognise a GB1/RHD3-type G domain in the interval 32–267 (DGTFICVSVF…TTLIPLTDSS (236 aa)). 42–49 (GPQSSGKS) is a GTP binding site.

The protein belongs to the TRAFAC class dynamin-like GTPase superfamily. GB1/RHD3 GTPase family. RHD3 subfamily.

It is found in the endoplasmic reticulum membrane. In terms of biological role, probable GTP-binding protein that may be involved in cell development. The protein is Protein SEY1 homolog of Giardia intestinalis (strain ATCC 50803 / WB clone C6) (Giardia lamblia).